Reading from the N-terminus, the 496-residue chain is Squalene epoxidase ERG1 (496 aa).

The Cytoplasmic segment spans residues 1–16 (MSAVNVAPELINADNT). Residues 17 to 37 (ITYDAIVIGAGVIGPCVATGL) form a helical membrane-spanning segment. FAD-binding positions include 28–29 (VI), 48–49 (ER), Arg56, and Arg158. Topologically, residues 38–474 (ARKGKKVLIV…FLGLPMALLE (437 aa)) are lumenal. Glycyl lysine isopeptide (Lys-Gly) (interchain with G-Cter in ubiquitin) cross-links involve residues Lys284, Lys289, and Lys311. FAD contacts are provided by Asp335 and Met348. Residues 475-495 (GIMILITAIRVFTPFLFGELI) form a helical membrane-spanning segment. Residue Gly496 is a topological domain, cytoplasmic.

The protein belongs to the squalene monooxygenase family. As to quaternary structure, interacts with ERG28. FAD is required as a cofactor.

It is found in the microsome membrane. The protein localises to the endoplasmic reticulum membrane. It localises to the lipid droplet. It carries out the reaction squalene + reduced [NADPH--hemoprotein reductase] + O2 = (S)-2,3-epoxysqualene + oxidized [NADPH--hemoprotein reductase] + H2O + H(+). It participates in terpene metabolism; lanosterol biosynthesis; lanosterol from farnesyl diphosphate: step 2/3. With respect to regulation, inhibited by the allylamine antimycotic drugs. Its function is as follows. Squalene epoxidase; part of the third module of ergosterol biosynthesis pathway that includes the late steps of the pathway. ERG1 catalyzes the epoxidation of squalene into 2,3-epoxysqualene. The third module or late pathway involves the ergosterol synthesis itself through consecutive reactions that mainly occur in the endoplasmic reticulum (ER) membrane. Firstly, the squalene synthase ERG9 catalyzes the condensation of 2 farnesyl pyrophosphate moieties to form squalene, which is the precursor of all steroids. Squalene synthase is crucial for balancing the incorporation of farnesyl diphosphate (FPP) into sterol and nonsterol isoprene synthesis. Secondly, the squalene epoxidase ERG1 catalyzes the stereospecific oxidation of squalene to (S)-2,3-epoxysqualene, which is considered to be a rate-limiting enzyme in steroid biosynthesis. Then, the lanosterol synthase ERG7 catalyzes the cyclization of (S)-2,3 oxidosqualene to lanosterol, a reaction that forms the sterol core. In the next steps, lanosterol is transformed to zymosterol through a complex process involving various demethylation, reduction and desaturation reactions. The lanosterol 14-alpha-demethylase ERG11 (also known as CYP51) catalyzes C14-demethylation of lanosterol to produce 4,4'-dimethyl cholesta-8,14,24-triene-3-beta-ol, which is critical for ergosterol biosynthesis. The C-14 reductase ERG24 reduces the C14=C15 double bond of 4,4-dimethyl-cholesta-8,14,24-trienol to produce 4,4-dimethyl-cholesta-8,24-dienol. 4,4-dimethyl-cholesta-8,24-dienol is substrate of the C-4 demethylation complex ERG25-ERG26-ERG27 in which ERG25 catalyzes the three-step monooxygenation required for the demethylation of 4,4-dimethyl and 4alpha-methylsterols, ERG26 catalyzes the oxidative decarboxylation that results in a reduction of the 3-beta-hydroxy group at the C-3 carbon to an oxo group, and ERG27 is responsible for the reduction of the keto group on the C-3. ERG28 has a role as a scaffold to help anchor ERG25, ERG26 and ERG27 to the endoplasmic reticulum and ERG29 regulates the activity of the iron-containing C4-methylsterol oxidase ERG25. Then, the sterol 24-C-methyltransferase ERG6 catalyzes the methyl transfer from S-adenosyl-methionine to the C-24 of zymosterol to form fecosterol. The C-8 sterol isomerase ERG2 catalyzes the reaction which results in unsaturation at C-7 in the B ring of sterols and thus converts fecosterol to episterol. The sterol-C5-desaturase ERG3 then catalyzes the introduction of a C-5 double bond in the B ring to produce 5-dehydroepisterol. The C-22 sterol desaturase ERG5 further converts 5-dehydroepisterol into ergosta-5,7,22,24(28)-tetraen-3beta-ol by forming the C-22(23) double bond in the sterol side chain. Finally, ergosta-5,7,22,24(28)-tetraen-3beta-ol is substrate of the C-24(28) sterol reductase ERG4 to produce ergosterol. In Saccharomyces cerevisiae (strain ATCC 204508 / S288c) (Baker's yeast), this protein is Squalene epoxidase ERG1.